Consider the following 327-residue polypeptide: Phenylalanine--tRNA ligase alpha subunit (327 aa).

Residue E252 coordinates Mg(2+).

This sequence belongs to the class-II aminoacyl-tRNA synthetase family. Phe-tRNA synthetase alpha subunit type 1 subfamily. Tetramer of two alpha and two beta subunits. Mg(2+) is required as a cofactor.

The protein localises to the cytoplasm. The enzyme catalyses tRNA(Phe) + L-phenylalanine + ATP = L-phenylalanyl-tRNA(Phe) + AMP + diphosphate + H(+). This chain is Phenylalanine--tRNA ligase alpha subunit, found in Aliivibrio fischeri (strain ATCC 700601 / ES114) (Vibrio fischeri).